A 320-amino-acid polypeptide reads, in one-letter code: Ferrochelatase (320 aa).

Fe cation contacts are provided by histidine 194 and glutamate 275.

This sequence belongs to the ferrochelatase family.

The protein resides in the cytoplasm. The catalysed reaction is heme b + 2 H(+) = protoporphyrin IX + Fe(2+). The protein operates within porphyrin-containing compound metabolism; protoheme biosynthesis; protoheme from protoporphyrin-IX: step 1/1. Its function is as follows. Catalyzes the ferrous insertion into protoporphyrin IX. This Enterobacter sp. (strain 638) protein is Ferrochelatase.